The following is a 131-amino-acid chain: Phosphomevalonate dehydratase small subunit (131 aa).

Ser62 acts as the Proton acceptor in catalysis.

This sequence belongs to the AcnX type II small subunit family. As to quaternary structure, heterodimer composed of a large subunit (PMDh-L) and a small subunit (PMDh-S).

It catalyses the reaction (R)-5-phosphomevalonate = (2E)-3-methyl-5-phosphooxypent-2-enoate + H2O. The protein operates within isoprenoid biosynthesis; isopentenyl diphosphate biosynthesis via mevalonate pathway. Functionally, component of a hydro-lyase that catalyzes the dehydration of mevalonate 5-phosphate (MVA5P) to form trans-anhydromevalonate 5-phosphate (tAHMP). Involved in the archaeal mevalonate (MVA) pathway, which provides fundamental precursors for isoprenoid biosynthesis, such as isopentenyl diphosphate (IPP) and dimethylallyl diphosphate (DMAPP). The polypeptide is Phosphomevalonate dehydratase small subunit (Thermococcus gammatolerans (strain DSM 15229 / JCM 11827 / EJ3)).